A 702-amino-acid polypeptide reads, in one-letter code: MNSLFASTARGLEELLKTELENLGAVECQVVQGGVHFKGDTRLVYQSLMWSRLASRIMLPLGECKVYSDLDLYLGVQAINWTEMFNPGATFAVHFSGLNDTIRNSQYGAMKVKDAIVDAFTRKNLPRPNVDRDAPDIRVNVWLHKETASIALDLSGDGLHLRGYRDRAGIAPIKETLAAAIVMRSGWQPGTPLLDPMCGSGTLLIEAAMLATDRAPGLHRGRWGFSGWAQHDEAIWQEVKAEAQTRARKGLAEYSSHFYGSDSDARVIQRARTNARLAGIGELITFEVKDVAQLTNPLPKEPYGTVLSNPPYGERLDSEPALIALHSLLGRIMKNQFGGWNLSLFSASPDLLSCLQLRADKQYKAKNGPLDCVQKNYHVAESTPDSKPAMVAEDYANRLRKNLKKFEKWARQEGIECYRLYDADLPEYNVAVDRYADWVVVQEYAPPKTIDAHKARQRLFDIIAATISVLGIAPNKLVLKTRERQKGKNQYQKLGEKGEFLEVTEYNAHLWVNLTDYLDTGLFLDHRIARRMLGQMSKGKDFLNLFSYTGSATVHAGLGGARSTTTVDMSRTYLEWAERNLRLNGLTGRAHRLIQADCLAWLREANEQFDLIFIDPPTFSNSKRMEDAFDVQRDHLALMKDLKRLLRAGGTIMFSNNKRGFRMDLDGLAKLGLKAQEITQKTLSQDFARNRQIHNCWLITAA.

One can recognise a THUMP domain in the interval 43–154 (LVYQSLMWSR…KETASIALDL (112 aa)).

Belongs to the methyltransferase superfamily. RlmKL family.

Its subcellular location is the cytoplasm. It catalyses the reaction guanosine(2445) in 23S rRNA + S-adenosyl-L-methionine = N(2)-methylguanosine(2445) in 23S rRNA + S-adenosyl-L-homocysteine + H(+). It carries out the reaction guanosine(2069) in 23S rRNA + S-adenosyl-L-methionine = N(2)-methylguanosine(2069) in 23S rRNA + S-adenosyl-L-homocysteine + H(+). In terms of biological role, specifically methylates the guanine in position 2445 (m2G2445) and the guanine in position 2069 (m7G2069) of 23S rRNA. The protein is Ribosomal RNA large subunit methyltransferase K/L of Escherichia coli O157:H7.